The following is a 72-amino-acid chain: Large ribosomal subunit protein uL29 (72 aa).

It belongs to the universal ribosomal protein uL29 family.

The chain is Large ribosomal subunit protein uL29 from Thermodesulfovibrio yellowstonii (strain ATCC 51303 / DSM 11347 / YP87).